Here is a 504-residue protein sequence, read N- to C-terminus: Maturase K (504 aa).

Belongs to the intron maturase 2 family. MatK subfamily.

The protein localises to the plastid. It is found in the chloroplast. Usually encoded in the trnK tRNA gene intron. Probably assists in splicing its own and other chloroplast group II introns. The sequence is that of Maturase K from Impatiens capensis (Spotted jewelweed).